The following is a 528-amino-acid chain: G patch domain-containing protein 2 (528 aa).

Positions 36–119 are disordered; that stretch reads LEESSEQARG…NKKDHSDSDD (84 aa). Positions 63 to 77 are enriched in basic residues; the sequence is RQARKRRGRKRRSYN. A compositionally biased stretch (basic and acidic residues) spans 98–117; that stretch reads EPSKDYRENHNNNKKDHSDS. Residues S115, S117, S146, and S195 each carry the phosphoserine modification. 2 disordered regions span residues 232-282 and 487-528; these read SEET…GDDE and GRDG…GKSA. The span at 239–252 shows a compositional bias: basic and acidic residues; the sequence is NKDKMECEEQKVSD. Residues 467–513 enclose the G-patch domain; it reads ENNIGNRMLQNMGWTPGSGLGRDGKGISEPIQAMQRPKGLGLGFPLP. The segment covering 514–528 has biased composition (polar residues); the sequence is KSTSATTTPNAGKSA.

Interacts with DHX15. As to expression, testis.

The protein localises to the nucleus speckle. It is found in the nucleus. It localises to the nucleolus. Functionally, enhances the ATPase activity of DHX15 in vitro. The protein is G patch domain-containing protein 2 (GPATCH2) of Homo sapiens (Human).